Here is a 219-residue protein sequence, read N- to C-terminus: Ribose-5-phosphate isomerase A (219 aa).

Substrate-binding positions include 28–31 (TGST), 81–84 (DGAD), and 94–97 (KGGG). E103 serves as the catalytic Proton acceptor. K121 serves as a coordination point for substrate.

Belongs to the ribose 5-phosphate isomerase family. As to quaternary structure, homodimer.

It carries out the reaction aldehydo-D-ribose 5-phosphate = D-ribulose 5-phosphate. Its pathway is carbohydrate degradation; pentose phosphate pathway; D-ribose 5-phosphate from D-ribulose 5-phosphate (non-oxidative stage): step 1/1. Functionally, catalyzes the reversible conversion of ribose-5-phosphate to ribulose 5-phosphate. This chain is Ribose-5-phosphate isomerase A, found in Shewanella pealeana (strain ATCC 700345 / ANG-SQ1).